A 342-amino-acid polypeptide reads, in one-letter code: viral G-protein coupled receptor (342 aa).

Over 1–51 (MAAEDFLTIFLDDDESWNETLNMSGYDYSGNFSLEVSVCEMTTVVPYTWNV) the chain is Extracellular. N-linked (GlcNAc...) asparagine; by host glycans are attached at residues Asn18, Asn22, and Asn31. The helical transmembrane segment at 52–72 (GILSLIFLINVLGNGLVTYIF) threads the bilayer. Topologically, residues 73–92 (CKHRSRAGAIDILLLGICLN) are cytoplasmic. The chain crosses the membrane as a helical span at residues 93-113 (SLCLSISLLAEVLMFLFPNII). Over 114 to 121 (STGLCRLE) the chain is Extracellular. The chain crosses the membrane as a helical span at residues 122 to 142 (IFFYYLYVYLDIFSVVCVSLV). The Cytoplasmic portion of the chain corresponds to 143–159 (RYLLVAYSTRSWPKKQS). The helical transmembrane segment at 160 to 180 (LGWVLTSAALLIALVLSGDAC) threads the bilayer. At 181-217 (RHRSRVVDPVSKQAMCYENAGNMTADWRLHVRTVSVT) the chain is on the extracellular side. Residues 218 to 238 (AGFLLPLALLILFYALTWCVV) traverse the membrane as a helical segment. Topologically, residues 239–251 (RRTKLQARRKVRG) are cytoplasmic. A helical membrane pass occupies residues 252–272 (VIVAVVLLFFVFCFPYHVLNL). At 273–293 (LDTLLRRRWIRDSCYTRGLIN) the chain is on the extracellular side. A helical membrane pass occupies residues 294-314 (VGLAVTSLLQALYSAVVPLIY). Over 315–342 (SCLGSLFRQRMYGLFQSLRQSFMSGATT) the chain is Cytoplasmic.

This sequence belongs to the G-protein coupled receptor 1 family. Interacts with protein K7; this interaction promotes vGPCR proteasomal degradation. Interacts with host CADM1; this interaction is essential for chronic NF-kappa-B activation.

It localises to the host cell membrane. Functionally, receptor that signals constitutively via several signaling pathways including PI3K/AKT as well as mitogen- and stress-activated/MAP kinases. Promotes host cell proliferation and survival, modulates cell migration, stimulates angiogenesis, and recruits inflammatory cells, both in expressing cells and in neighboring cells. Maintains chronic activation of NF-kappa-B via interaction with host CADM1. This chain is viral G-protein coupled receptor (ORF74), found in Human herpesvirus 8 type P (isolate GK18) (HHV-8).